Here is a 228-residue protein sequence, read N- to C-terminus: Ribosomal RNA large subunit methyltransferase E (228 aa).

Residues glycine 76, tryptophan 78, aspartate 99, aspartate 115, and aspartate 139 each contribute to the S-adenosyl-L-methionine site. Lysine 179 (proton acceptor) is an active-site residue.

It belongs to the class I-like SAM-binding methyltransferase superfamily. RNA methyltransferase RlmE family.

The protein localises to the cytoplasm. The catalysed reaction is uridine(2552) in 23S rRNA + S-adenosyl-L-methionine = 2'-O-methyluridine(2552) in 23S rRNA + S-adenosyl-L-homocysteine + H(+). Specifically methylates the uridine in position 2552 of 23S rRNA at the 2'-O position of the ribose in the fully assembled 50S ribosomal subunit. This chain is Ribosomal RNA large subunit methyltransferase E, found in Bradyrhizobium diazoefficiens (strain JCM 10833 / BCRC 13528 / IAM 13628 / NBRC 14792 / USDA 110).